We begin with the raw amino-acid sequence, 1227 residues long: Pre-mRNA-splicing factor ATP-dependent RNA helicase PRP16 (1227 aa).

Glycine 2 carries the post-translational modification N-acetylglycine. Serine 56 carries the phosphoserine modification. The segment covering 60-89 has biased composition (basic and acidic residues); the sequence is REREEKDDGEDKKKSKVSSYKDWEESKDDQ. Residues 60 to 320 are disordered; that stretch reads REREEKDDGE…ERQQWEDDQR (261 aa). Residue threonine 117 is modified to Phosphothreonine. Residues 128 to 201 are compositionally biased toward basic and acidic residues; sequence FWERSRQRER…SRRNEPESPR (74 aa). 2 positions are modified to phosphoserine: serine 199 and serine 224. The span at 222-239 shows a compositional bias: polar residues; that stretch reads YGSSRRSQWESPSPTPSY. Over residues 240–263 the composition is skewed to basic and acidic residues; the sequence is RDSERSHRLSTRDRDRSVRGKYSD. Lysine 260 bears the N6-acetyllysine mark. The span at 300-310 shows a compositional bias: acidic residues; the sequence is GEEGISFDTEE. Residues 311–320 show a composition bias toward basic and acidic residues; it reads ERQQWEDDQR. Residues lysine 482, lysine 483, and lysine 504 each participate in a glycyl lysine isopeptide (Lys-Gly) (interchain with G-Cter in SUMO2) cross-link. Residues 542–705 enclose the Helicase ATP-binding domain; sequence LTIIRDNSIV…FGNVPIFHIP (164 aa). An ATP-binding site is contributed by 555 to 562; sequence GETGSGKT. The DEAH box signature appears at 652-655; that stretch reads DEAH. The Helicase C-terminal domain maps to 727 to 902; the sequence is AVKQSLQVHL…NVVLLLKSLG (176 aa). The interval 1155-1227 is disordered; that stretch reads GKSRQENRRR…PRRTPARFGL (73 aa). Basic and acidic residues-rich tracts occupy residues 1157–1169 and 1181–1194; these read SRQE…KEEA and EQLR…EKRS. Lysine 1166 participates in a covalent cross-link: Glycyl lysine isopeptide (Lys-Gly) (interchain with G-Cter in SUMO2). The residue at position 1194 (serine 1194) is a Phosphoserine.

Belongs to the DEAD box helicase family. DEAH subfamily. PRP16 sub-subfamily. As to quaternary structure, identified in the spliceosome C complex.

The protein resides in the nucleus. It carries out the reaction ATP + H2O = ADP + phosphate + H(+). In terms of biological role, probable ATP-binding RNA helicase. Involved in pre-mRNA splicing as component of the spliceosome. In Homo sapiens (Human), this protein is Pre-mRNA-splicing factor ATP-dependent RNA helicase PRP16 (DHX38).